Consider the following 806-residue polypeptide: MQFFGRLVNTFSGVTNLFSNPFRVKEVAVADYTSSDRVREEGQLILFQNTPNRTWDCVLVNPRNSQSGFRLFQLELEADALVNFHQYSSQLLPFYESSPQVLHTEVLQHLTDLIRNHPSWSVAHLAVELGIRECFHHSRIISCANCAENEEGCTPLHLACRKGDGEILVELVQYCHTQMDVTDYKGETVFHYAVQGDNSQVLQLLGRNAVAGLNQVNNQGLTPLHLACQLGKQEMVRVLLLCNARCNIMGPNGYPIHSAMKFSQKGCAEMIISMDSSQIHSKDPRYGASPLHWAKNAEMARMLLKRGCNVNSTSSAGNTALHVAVMRNRFDCAIVLLTHGANADARGEHGNTPLHLAMSKDNVEMIKALIVFGAEVDTPNDFGETPTFLASKIGRLVTRKAILTLLRTVGAEYCFPPIHGVPAEQGSAAPHHPFSLERAQPPPISLNNLELQDLMHISRARKPAFILGSMRDEKRTHDHLLCLDGGGVKGLIIIQLLIAIEKASGVATKDLFDWVAGTSTGGILALAILHSKSMAYMRGMYFRMKDEVFRGSRPYESGPLEEFLKREFGEHTKMTDVRKPKVMLTGTLSDRQPAELHLFRNYDAPETVREPRFNQNVNLRPPAQPSDQLVWRAARSSGAAPTYFRPNGRFLDGGLLANNPTLDAMTEIHEYNQDLIRKGQANKVKKLSIVVSLGTGRSPQVPVTCVDVFRPSNPWELAKTVFGAKELGKMVVDCCTDPDGRAVDRARAWCEMVGIQYFRLNPQLGTDIMLDEVSDTVLVNALWETEVYIYEHREEFQKLIQLLLSP.

ANK repeat units follow at residues 120–147, 151–181, 185–215, 219–248, 251–281, 286–312, 316–345, 349–378, and 382–403; these read WSVAHLAVELGIRECFHHSRIISCANCA, EGCTPLHLACRKGDGEILVELVQYCHTQMDV, KGETVFHYAVQGDNSQVLQLLGRNAVAGLNQ, QGLTPLHLACQLGKQEMVRVLLLCNARCNI, PNGYPIHSAMKFSQKGCAEMIISMDSSQIHS, YGASPLHWAKNAEMARMLLKRGCNVNS, AGNTALHVAVMRNRFDCAIVLLTHGANADA, HGNTPLHLAMSKDNVEMIKALIVFGAEVDT, and FGETPTFLASKIGRLVTRKAIL. A run of 2 helical transmembrane segments spans residues 480-500 and 511-531; these read LLCLDGGGVKGLIIIQLLIAI and LFDWVAGTSTGGILALAILHS. In terms of domain architecture, PNPLA spans 481-665; it reads LCLDGGGVKG…LANNPTLDAM (185 aa). The short motif at 485–490 is the GXGXXG element; that stretch reads GGGVKG. The GXSXG motif lies at 517–521; the sequence is GTSTG. Residue S519 is the Nucleophile of the active site. The Proton acceptor role is filled by D652. The short motif at 652 to 654 is the DGA/G element; it reads DGG. Residues 677–686 are calmodulin-binding (1-9-14 motif); that stretch reads RKGQANKVKK. Residues 748-759 form a calmodulin-binding (IQ motif) region; sequence AWCEMVGIQYFR.

In terms of assembly, homodimer formed by catalytic domains tightly interacting through a large hydrophobic interface. The contact area involves 3 alpha helices, several loops and a part of the beta sheet from each monomer. Both active sites of the dimer are in close proximity adopting an open conformation that provide sufficient space for phospholipid access and favoring cooperativity in deacylation-reacylation reactions. Each monomer has 9 ankyrin repeats stacked side-by-side in an elongated structure oriented outwards from the catalytic core. In terms of tissue distribution, four different transcripts were found to be expressed in a distinct tissue distribution.

The protein localises to the cytoplasm. It localises to the cell membrane. Its subcellular location is the mitochondrion. The protein resides in the cell projection. It is found in the pseudopodium. The enzyme catalyses a 1,2-diacyl-sn-glycero-3-phosphocholine + H2O = a 1-acyl-sn-glycero-3-phosphocholine + a fatty acid + H(+). The catalysed reaction is a 1-O-alkyl-2-acyl-sn-glycero-3-phosphocholine + H2O = a 1-O-alkyl-sn-glycero-3-phosphocholine + a fatty acid + H(+). It catalyses the reaction 1,2-dihexadecanoyl-sn-glycero-3-phosphocholine + H2O = 1-hexadecanoyl-sn-glycero-3-phosphocholine + hexadecanoate + H(+). It carries out the reaction 1-hexadecanoyl-2-(9Z-octadecenoyl)-sn-glycero-3-phosphocholine + H2O = 1-hexadecanoyl-sn-glycero-3-phosphocholine + (9Z)-octadecenoate + H(+). The enzyme catalyses 1-hexadecanoyl-2-(9Z,12Z-octadecadienoyl)-sn-glycero-3-phosphocholine + H2O = (9Z,12Z)-octadecadienoate + 1-hexadecanoyl-sn-glycero-3-phosphocholine + H(+). The catalysed reaction is 1-hexadecanoyl-2-(5Z,8Z,11Z,14Z-eicosatetraenoyl)-sn-glycero-3-phosphocholine + H2O = 1-hexadecanoyl-sn-glycero-3-phosphocholine + (5Z,8Z,11Z,14Z)-eicosatetraenoate + H(+). It catalyses the reaction 1-octadecanoyl-2-(5Z,8Z,11Z,14Z-eicosatetraenoyl)-sn-glycero-3-phosphocholine + H2O = 1-octadecanoyl-sn-glycero-3-phosphocholine + (5Z,8Z,11Z,14Z)-eicosatetraenoate + H(+). It carries out the reaction 1-hexadecanoyl-2-(5Z,8Z,11Z,14Z-eicosatetraenoyl)-sn-glycero-3-phosphoethanolamine + H2O = 1-hexadecanoyl-sn-glycero-3-phosphoethanolamine + (5Z,8Z,11Z,14Z)-eicosatetraenoate + H(+). The enzyme catalyses 1,2-dihexadecanoyl-sn-glycero-3-phosphate + H2O = 1-hexadecanoyl-sn-glycero-3-phosphate + hexadecanoate + H(+). The catalysed reaction is a 1-acyl-sn-glycero-3-phosphocholine + H2O = sn-glycerol 3-phosphocholine + a fatty acid + H(+). It catalyses the reaction 1-hexadecanoyl-sn-glycero-3-phosphocholine + H2O = sn-glycerol 3-phosphocholine + hexadecanoate + H(+). It carries out the reaction 1-(5Z,8Z,11Z,14Z-eicosatetraenoyl)-sn-glycero-3-phosphocholine + H2O = sn-glycerol 3-phosphocholine + (5Z,8Z,11Z,14Z)-eicosatetraenoate + H(+). The enzyme catalyses 2-(5Z,8Z,11Z,14Z)-eicosatetraenoyl-sn-glycero-3-phosphocholine + H2O = sn-glycerol 3-phosphocholine + (5Z,8Z,11Z,14Z)-eicosatetraenoate + H(+). The catalysed reaction is 1-O-hexadecyl-2-(5Z,8Z,11Z,14Z)-eicosatetraenoyl-sn-glycero-3-phosphocholine + H2O = 1-O-hexadecyl-sn-glycero-3-phosphocholine + (5Z,8Z,11Z,14Z)-eicosatetraenoate + H(+). It catalyses the reaction 1-O-hexadecyl-2-acetyl-sn-glycero-3-phosphocholine + H2O = 1-O-hexadecyl-sn-glycero-3-phosphocholine + acetate + H(+). It carries out the reaction hexadecanoyl-CoA + H2O = hexadecanoate + CoA + H(+). The enzyme catalyses 1',3'-bis[1,2-di-(9Z-octadecenoyl)-sn-glycero-3-phospho]-glycerol + H2O = 1'-[1,2-di-(9Z-octadecenoyl)-sn-glycero-3-phospho]-3'-[1-(9Z-octadecenoyl)-sn-glycero-3-phospho]-glycerol + (9Z)-octadecenoate + H(+). The catalysed reaction is 1'-[1,2-di-(9Z-octadecenoyl)-sn-glycero-3-phospho]-3'-[1-(9Z-octadecenoyl)-sn-glycero-3-phospho]-glycerol + H2O = 1',3'-bis-[1-(9Z-octadecenoyl)-sn-glycero-3-phospho]-glycerol + (9Z)-octadecenoate + H(+). It catalyses the reaction 1',3'-bis-[1,2-di-(9Z,12Z-octadecadienoyl)-sn-glycero-3-phospho]-glycerol + H2O = 1'-[1,2-di-(9Z,12Z-octadecadienoyl)-sn-glycero-3-phospho]-3'-[1-(9Z,12Z-octadecadienoyl)-sn-glycero-3-phospho]-glycerol + (9Z,12Z)-octadecadienoate + H(+). It carries out the reaction 1-octadecanoyl-2-(15-hydroxy-(5Z,8Z,11Z,13E)-eicosatetraenoyl)-sn-glycero-3-phosphoethanolamine + H2O = 1-octadecanoyl-sn-glycero-3-phosphoethanolamine + 15-hydroxy-(5Z,8Z,11Z,13E)-eicosatetraenoate + H(+). Its activity is regulated as follows. Activated by ATP. Inhibited by calcium-activated calmodulin. Inhibited by bromoenol lactone (BEL). In terms of biological role, calcium-independent phospholipase involved in phospholipid remodeling with implications in cellular membrane homeostasis, mitochondrial integrity and signal transduction. Hydrolyzes the ester bond of the fatty acyl group attached at sn-1 or sn-2 position of phospholipids (phospholipase A1 and A2 activity respectively), producing lysophospholipids that are used in deacylation-reacylation cycles. Hydrolyzes both saturated and unsaturated long fatty acyl chains in various glycerophospholipid classes such as phosphatidylcholines, phosphatidylethanolamines and phosphatidates, with a preference for hydrolysis at sn-2 position. Can further hydrolyze lysophospholipids carrying saturated fatty acyl chains (lysophospholipase activity). Upon oxidative stress, contributes to remodeling of mitochondrial phospholipids in pancreatic beta cells, in a repair mechanism to reduce oxidized lipid content. Preferentially hydrolyzes oxidized polyunsaturated fatty acyl chains from cardiolipins, yielding monolysocardiolipins that can be reacylated with unoxidized fatty acyls to regenerate native cardiolipin species. Hydrolyzes oxidized glycerophosphoethanolamines present in pancreatic islets, releasing oxidized polyunsaturated fatty acids such as hydroxyeicosatetraenoates (HETEs). Has thioesterase activity toward fatty-acyl CoA releasing CoA-SH known to facilitate fatty acid transport and beta-oxidation in mitochondria particularly in skeletal muscle. Plays a role in regulation of membrane dynamics and homeostasis. Selectively hydrolyzes sn-2 arachidonoyl group in plasmalogen phospholipids, structural components of lipid rafts and myelin. Regulates F-actin polymerization at the pseudopods, which is required for both speed and directionality of MCP1/CCL2-induced monocyte chemotaxis. Targets membrane phospholipids to produce potent lipid signaling messengers. Generates lysophosphatidate (LPA, 1-acyl-glycerol-3-phosphate), which acts via G-protein receptors in various cell types. Has phospholipase A2 activity toward platelet-activating factor (PAF, 1-O-alkyl-2-acetyl-sn-glycero-3-phosphocholine), likely playing a role in inactivation of this potent pro-inflammatory signaling lipid. In response to glucose, amplifies calcium influx in pancreatic beta cells to promote INS secretion. Its function is as follows. Lacks the catalytic domain and may act as a negative regulator of the catalytically active isoforms. In Homo sapiens (Human), this protein is 85/88 kDa calcium-independent phospholipase A2 (PLA2G6).